A 188-amino-acid chain; its full sequence is Large ribosomal subunit protein eL18 (188 aa).

Lys119 is covalently cross-linked (Glycyl lysine isopeptide (Lys-Gly) (interchain with G-Cter in SUMO2)). Ser130 is modified (phosphoserine). Residues 150 to 188 are disordered; the sequence is RHFGKAPGTPHSHTKPYVRSKGRKFERARGRRASRGYKN. Thr158 is subject to Phosphothreonine. Basic residues-rich tracts occupy residues 161-171 and 178-188; these read SHTKPYVRSKG and RGRRASRGYKN. A Glycyl lysine isopeptide (Lys-Gly) (interchain with G-Cter in SUMO2) cross-link involves residue Lys164.

This sequence belongs to the eukaryotic ribosomal protein eL18 family. In terms of assembly, component of the large ribosomal subunit.

The protein localises to the cytoplasm. Its subcellular location is the cytosol. The protein resides in the rough endoplasmic reticulum. Component of the large ribosomal subunit. The ribosome is a large ribonucleoprotein complex responsible for the synthesis of proteins in the cell. The polypeptide is Large ribosomal subunit protein eL18 (Rpl18) (Mus musculus (Mouse)).